The following is a 375-amino-acid chain: S-adenosylmethionine:tRNA ribosyltransferase-isomerase (375 aa).

The protein belongs to the QueA family. Monomer.

The protein localises to the cytoplasm. The catalysed reaction is 7-aminomethyl-7-carbaguanosine(34) in tRNA + S-adenosyl-L-methionine = epoxyqueuosine(34) in tRNA + adenine + L-methionine + 2 H(+). It functions in the pathway tRNA modification; tRNA-queuosine biosynthesis. Its function is as follows. Transfers and isomerizes the ribose moiety from AdoMet to the 7-aminomethyl group of 7-deazaguanine (preQ1-tRNA) to give epoxyqueuosine (oQ-tRNA). The polypeptide is S-adenosylmethionine:tRNA ribosyltransferase-isomerase (Rickettsia typhi (strain ATCC VR-144 / Wilmington)).